The sequence spans 393 residues: Chorismate synthase (393 aa).

Residues R40 and R46 each coordinate NADP(+). Residues 129–131 (RSS), 249–250 (QA), G301, 316–320 (KPIPT), and R342 each bind FMN.

The protein belongs to the chorismate synthase family. As to quaternary structure, homotetramer. It depends on FMNH2 as a cofactor.

It catalyses the reaction 5-O-(1-carboxyvinyl)-3-phosphoshikimate = chorismate + phosphate. It participates in metabolic intermediate biosynthesis; chorismate biosynthesis; chorismate from D-erythrose 4-phosphate and phosphoenolpyruvate: step 7/7. Functionally, catalyzes the anti-1,4-elimination of the C-3 phosphate and the C-6 proR hydrogen from 5-enolpyruvylshikimate-3-phosphate (EPSP) to yield chorismate, which is the branch point compound that serves as the starting substrate for the three terminal pathways of aromatic amino acid biosynthesis. This reaction introduces a second double bond into the aromatic ring system. The polypeptide is Chorismate synthase (Geobacter sulfurreducens (strain ATCC 51573 / DSM 12127 / PCA)).